Consider the following 44-residue polypeptide: Antifungal protein R (44 aa).

Belongs to the thaumatin family.

Has antifungal activity. Inhibits the growth of Trichoderma viridae and Candida albicans. The sequence is that of Antifungal protein R from Hordeum vulgare (Barley).